The following is a 67-amino-acid chain: Alpha-toxin Cn12 (67 aa).

In terms of domain architecture, LCN-type CS-alpha/beta spans 1 to 66; that stretch reads RDGYPLASNG…WGDSGTGPCR (66 aa). 4 cysteine pairs are disulfide-bonded: cysteine 11–cysteine 65, cysteine 15–cysteine 40, cysteine 25–cysteine 45, and cysteine 29–cysteine 47.

As to expression, expressed by the venom gland.

It is found in the secreted. In terms of biological role, alpha toxins bind voltage-independently at site-3 of sodium channels (Nav) and inhibit the inactivation of the activated channels, thereby blocking neuronal transmission. This toxin binds, in vitro, to sodium channels and inhibits the inactivation of the activated channels. Seems not toxic to mice, crickets and sweet-water shrimps. The polypeptide is Alpha-toxin Cn12 (Centruroides noxius (Mexican scorpion)).